We begin with the raw amino-acid sequence, 368 residues long: 1-deoxy-D-xylulose 5-phosphate reductoisomerase (368 aa).

Residues T10, G11, S12, I13, Q38, and N100 each contribute to the NADPH site. K101 contributes to the 1-deoxy-D-xylulose 5-phosphate binding site. E102 provides a ligand contact to NADPH. D125 provides a ligand contact to Mn(2+). The 1-deoxy-D-xylulose 5-phosphate site is built by S126, E127, S151, and H172. E127 provides a ligand contact to Mn(2+). G178 contributes to the NADPH binding site. 4 residues coordinate 1-deoxy-D-xylulose 5-phosphate: S185, N190, K191, and E194. Residue E194 participates in Mn(2+) binding.

This sequence belongs to the DXR family. It depends on Mg(2+) as a cofactor. Mn(2+) serves as cofactor.

It carries out the reaction 2-C-methyl-D-erythritol 4-phosphate + NADP(+) = 1-deoxy-D-xylulose 5-phosphate + NADPH + H(+). It functions in the pathway isoprenoid biosynthesis; isopentenyl diphosphate biosynthesis via DXP pathway; isopentenyl diphosphate from 1-deoxy-D-xylulose 5-phosphate: step 1/6. Catalyzes the NADPH-dependent rearrangement and reduction of 1-deoxy-D-xylulose-5-phosphate (DXP) to 2-C-methyl-D-erythritol 4-phosphate (MEP). This is 1-deoxy-D-xylulose 5-phosphate reductoisomerase from Tropheryma whipplei (strain TW08/27) (Whipple's bacillus).